The primary structure comprises 123 residues: uncharacterized protein (123 aa).

This is an uncharacterized protein from Human cytomegalovirus (strain AD169) (HHV-5).